The primary structure comprises 362 residues: Transcription factor bHLH128 (362 aa).

The segment covering 1 to 16 has biased composition (low complexity); the sequence is MYQSSSSTSSSSQRSS. 4 disordered regions span residues 1–23, 78–106, 120–140, and 162–184; these read MYQS…GGGL, SDST…SNKD, SQQH…YSLA, and LNQP…HSRL. Polar residues predominate over residues 78-96; it reads SDSTTCGVNNSSDGQKQLG. Residues 162-173 are compositionally biased toward polar residues; the sequence is LNQPTSDYSPQG. The residue at position 189 (S189) is a Phosphoserine. A bHLH domain is found at 289-339; the sequence is CATHPRSIAERERRTRISGKLKKLQDLVPNMDKQTSYSDMLDLAVQHIKGL.

Homodimer.

Its subcellular location is the nucleus. The chain is Transcription factor bHLH128 (BHLH128) from Arabidopsis thaliana (Mouse-ear cress).